The following is a 173-amino-acid chain: Glutamyl-tRNA(Gln) amidotransferase subunit C, mitochondrial (173 aa).

Belongs to the GatC family. In terms of assembly, subunit of the heterotrimeric GatCAB amidotransferase (AdT) complex, composed of A, B and C subunits.

It localises to the mitochondrion. The catalysed reaction is L-glutamyl-tRNA(Gln) + L-glutamine + ATP + H2O = L-glutaminyl-tRNA(Gln) + L-glutamate + ADP + phosphate + H(+). Allows the formation of correctly charged Gln-tRNA(Gln) through the transamidation of misacylated Glu-tRNA(Gln) in the mitochondria. The reaction takes place in the presence of glutamine and ATP through an activated gamma-phospho-Glu-tRNA(Gln). In Drosophila persimilis (Fruit fly), this protein is Glutamyl-tRNA(Gln) amidotransferase subunit C, mitochondrial.